Reading from the N-terminus, the 156-residue chain is Arginine repressor (156 aa).

Belongs to the ArgR family.

It is found in the cytoplasm. Its pathway is amino-acid biosynthesis; L-arginine biosynthesis [regulation]. Its function is as follows. Regulates arginine biosynthesis genes. This Shewanella woodyi (strain ATCC 51908 / MS32) protein is Arginine repressor.